A 210-amino-acid polypeptide reads, in one-letter code: MRRGARGSTNLGGMTWQEVLEFNANSTPTKLYPDRDIPLQRSIRPEELLELRFYKEIRTSFLDESAFYIRRNPISVVQRNEDGLVRYSDRNKPKRKNDNLSLSDLDLDPKFFPEELRKTLGAASATGRKRARRKLDMKTFIDFTIKAQDLKDESSEAAHPNIEEEPDEGLEEEDEDFGDDDDNDYGENYFDNGEGDDYDDYDGDEGAIYE.

Position 103 is a phosphoserine (S103). Positions 151–210 (KDESSEAAHPNIEEEPDEGLEEEDEDFGDDDDNDYGENYFDNGEGDDYDDYDGDEGAIYE) are disordered. Acidic residues-rich tracts occupy residues 163–185 (EEEP…DNDY) and 193–210 (GEGD…AIYE).

Belongs to the eukaryotic RPC7 RNA polymerase subunit family. As to quaternary structure, component of the RNA polymerase III (Pol III) complex.

The protein localises to the cytoplasm. It localises to the nucleus. DNA-dependent RNA polymerase catalyzes the transcription of DNA into RNA using the four ribonucleoside triphosphates as substrates. Specific peripheric component of RNA polymerase III which synthesizes small RNAs, such as 5S rRNA and tRNAs. This is DNA-directed RNA polymerase III subunit rpc31 (rpc31) from Schizosaccharomyces pombe (strain 972 / ATCC 24843) (Fission yeast).